The following is a 181-amino-acid chain: Large ribosomal subunit protein uL5 (181 aa).

This sequence belongs to the universal ribosomal protein uL5 family. Part of the 50S ribosomal subunit; contacts the 5S rRNA and probably tRNA. Forms a bridge to the 30S subunit in the 70S ribosome.

In terms of biological role, this is one of the proteins that bind and probably mediate the attachment of the 5S RNA into the large ribosomal subunit, where it forms part of the central protuberance. In the 70S ribosome it contacts protein S13 of the 30S subunit (bridge B1b), connecting the 2 subunits; this bridge is implicated in subunit movement. May contact the P site tRNA; the 5S rRNA and some of its associated proteins might help stabilize positioning of ribosome-bound tRNAs. This is Large ribosomal subunit protein uL5 from Methanococcus aeolicus (strain ATCC BAA-1280 / DSM 17508 / OCM 812 / Nankai-3).